We begin with the raw amino-acid sequence, 269 residues long: 5'-nucleotidase SurE (269 aa).

D11, D12, S43, and N101 together coordinate a divalent metal cation.

This sequence belongs to the SurE nucleotidase family. A divalent metal cation is required as a cofactor.

The protein localises to the cytoplasm. The enzyme catalyses a ribonucleoside 5'-phosphate + H2O = a ribonucleoside + phosphate. In terms of biological role, nucleotidase that shows phosphatase activity on nucleoside 5'-monophosphates. This is 5'-nucleotidase SurE from Prochlorococcus marinus (strain MIT 9515).